The sequence spans 4450 residues: Gramicidin S synthase 2 (4450 aa).

The interval 467-1044 (DKTIHQLFTE…IQEISNYING (578 aa)) is domain 1 (proline-activating). Carrier domains lie at 971 to 1046 (VPTN…NGAK), 2006 to 2081 (APSS…ADGE), 3051 to 3126 (APRT…EETD), and 4089 to 4164 (APRN…THQE). 4 positions are modified to O-(pantetheine 4'-phosphoryl)serine: serine 1006, serine 2041, serine 3086, and serine 4124. A domain 2 (valine-activating) region spans residues 1521-2080 (DHVAVGWKDQ…SALAQYIADG (560 aa)). A domain 3 (ornithine-activating) region spans residues 2538-3134 (YATNKIFHEL…TDTEQYMAIQ (597 aa)). The domain 4 (leucine-activating) stretch occupies residues 3590 to 4172 (IQELFEEQVK…QESENNVHQP (583 aa)).

This sequence belongs to the ATP-dependent AMP-binding enzyme family. Large multienzyme complex of GrsA and GrsB. Pantetheine 4'-phosphate serves as cofactor.

Its pathway is antibiotic biosynthesis; gramicidin S biosynthesis. This protein is a multifunctional enzyme, able to activate and polymerize the amino acids Pro, Val, Orn and Leu. Activation sites for these AA consist of individual domains. This Brevibacillus brevis (Bacillus brevis) protein is Gramicidin S synthase 2 (grsB).